The following is a 274-amino-acid chain: NH(3)-dependent NAD(+) synthetase (274 aa).

46–53 (GISGGQDS) is a binding site for ATP. Asp52 serves as a coordination point for Mg(2+). A deamido-NAD(+)-binding site is contributed by Arg140. Thr160 lines the ATP pocket. Residue Glu165 participates in Mg(2+) binding. Deamido-NAD(+) is bound by residues Lys173 and Asp180. ATP-binding residues include Lys189 and Thr211. Position 260–261 (260–261 (HK)) interacts with deamido-NAD(+).

This sequence belongs to the NAD synthetase family. As to quaternary structure, homodimer.

It carries out the reaction deamido-NAD(+) + NH4(+) + ATP = AMP + diphosphate + NAD(+) + H(+). Its pathway is cofactor biosynthesis; NAD(+) biosynthesis; NAD(+) from deamido-NAD(+) (ammonia route): step 1/1. Functionally, catalyzes the ATP-dependent amidation of deamido-NAD to form NAD. Uses ammonia as a nitrogen source. The protein is NH(3)-dependent NAD(+) synthetase of Streptococcus pyogenes serotype M3 (strain ATCC BAA-595 / MGAS315).